The chain runs to 313 residues: NAD-capped RNA hydrolase NudC (313 aa).

Arg111 provides a ligand contact to substrate. The 126-residue stretch at 168–293 folds into the Nudix hydrolase domain; it reads PRIDPAVICL…DWSSASESKL (126 aa). A divalent metal cation is bound by residues Ala202, Glu218, and Glu222. The Nudix box signature appears at 203–224; the sequence is GFVEAGESFEVCVAREIREEIG. Substrate is bound at residue 236-243; sequence QQWPFPRS. A divalent metal cation is bound at residue Glu264.

It belongs to the Nudix hydrolase family. NudC subfamily. In terms of assembly, homodimer. Mg(2+) serves as cofactor. Requires Mn(2+) as cofactor.

The enzyme catalyses a 5'-end NAD(+)-phospho-ribonucleoside in mRNA + H2O = a 5'-end phospho-adenosine-phospho-ribonucleoside in mRNA + beta-nicotinamide D-ribonucleotide + 2 H(+). It catalyses the reaction NAD(+) + H2O = beta-nicotinamide D-ribonucleotide + AMP + 2 H(+). It carries out the reaction NADH + H2O = reduced beta-nicotinamide D-ribonucleotide + AMP + 2 H(+). Its function is as follows. mRNA decapping enzyme that specifically removes the nicotinamide adenine dinucleotide (NAD) cap from a subset of mRNAs by hydrolyzing the diphosphate linkage to produce nicotinamide mononucleotide (NMN) and 5' monophosphate mRNA. The NAD-cap is present at the 5'-end of some mRNAs and stabilizes RNA against 5'-processing. Has preference for mRNAs with a 5'-end purine. Catalyzes the hydrolysis of a broad range of dinucleotide pyrophosphates. This Mycobacterium tuberculosis (strain ATCC 25177 / H37Ra) protein is NAD-capped RNA hydrolase NudC.